The following is a 246-amino-acid chain: Transcription factor MYB113 (246 aa).

HTH myb-type domains lie at 5–61 (PKGL…KPSI) and 62–112 (KRGK…SKKH). 2 consecutive DNA-binding regions (H-T-H motif) follow at residues 33 to 57 (WHRV…LNYL) and 85 to 108 (WSLI…NTHL).

Interacts with BHLH002/EGL3/MYC146, BHLH012/MYC1 and BHLH042/TT8.

It localises to the nucleus. In terms of biological role, transcription activator, when associated with BHLH002/EGL3/MYC146, BHLH012/MYC1, or BHLH042/TT8. The polypeptide is Transcription factor MYB113 (MYB113) (Arabidopsis thaliana (Mouse-ear cress)).